The sequence spans 493 residues: GTPase Der (493 aa).

Residues 3–166 (PVIALVGRPN…EALGIFPKDN (164 aa)) form the EngA-type G 1 domain. Residues 9-16 (GRPNVGKS), 56-60 (DTGGI), and 118-121 (NKVD) contribute to the GTP site. The segment at 166-195 (NAEEEGEGEPASEEVAEGEEPTRIPGPSEK) is disordered. Positions 167–184 (AEEEGEGEPASEEVAEGE) are enriched in acidic residues. Residues 198–371 (IKIAIIGRPN…SVQESFRSAV (174 aa)) form the EngA-type G 2 domain. Residues 204 to 211 (GRPNVGKS), 251 to 255 (DTAGV), and 316 to 319 (NKWD) contribute to the GTP site. Residues 372–456 (TRWPTSRLTS…PIRIEYKGGE (85 aa)) form the KH-like domain. A compositionally biased stretch (basic and acidic residues) spans 454 to 463 (GGENPYEGKK). The segment at 454–493 (GGENPYEGKKNSLTARQVNKKRRLMSHHKKAEKKKKDKRR) is disordered. A compositionally biased stretch (basic residues) spans 471–493 (VNKKRRLMSHHKKAEKKKKDKRR).

This sequence belongs to the TRAFAC class TrmE-Era-EngA-EngB-Septin-like GTPase superfamily. EngA (Der) GTPase family. Associates with the 50S ribosomal subunit.

In terms of biological role, GTPase that plays an essential role in the late steps of ribosome biogenesis. This chain is GTPase Der, found in Pseudomonas aeruginosa (strain ATCC 15692 / DSM 22644 / CIP 104116 / JCM 14847 / LMG 12228 / 1C / PRS 101 / PAO1).